A 716-amino-acid polypeptide reads, in one-letter code: Translation initiation factor IF-2 (716 aa).

The tract at residues 52–135 (QQESNNNTKQ…PAAEPKEMPS (84 aa)) is disordered. Residues 56–125 (NNNTKQNTQN…KNNKGNKNNK (70 aa)) show a composition bias toward low complexity. Positions 218 to 387 (ERPAVVTIMG…GLVAEVQELK (170 aa)) constitute a tr-type G domain. A G1 region spans residues 227–234 (GHVDHGKT). 227–234 (GHVDHGKT) lines the GTP pocket. The G2 stretch occupies residues 252–256 (GITQH). The G3 stretch occupies residues 273-276 (DTPG). GTP contacts are provided by residues 273 to 277 (DTPGH) and 327 to 330 (NKID). The segment at 327-330 (NKID) is G4. Residues 363–365 (SAL) form a G5 region.

Belongs to the TRAFAC class translation factor GTPase superfamily. Classic translation factor GTPase family. IF-2 subfamily.

The protein localises to the cytoplasm. In terms of biological role, one of the essential components for the initiation of protein synthesis. Protects formylmethionyl-tRNA from spontaneous hydrolysis and promotes its binding to the 30S ribosomal subunits. Also involved in the hydrolysis of GTP during the formation of the 70S ribosomal complex. The sequence is that of Translation initiation factor IF-2 from Staphylococcus haemolyticus (strain JCSC1435).